Reading from the N-terminus, the 280-residue chain is Fasciclin-like arabinogalactan protein 3 (280 aa).

The first 24 residues, 1-24 (MGLKVSSSLLCLTILLAVSSIVSA), serve as a signal peptide directing secretion. Residues 25 to 169 (VNITRVLEKY…LSVVQISMPI (145 aa)) form the FAS1 domain. Asparagine 26, asparagine 126, and asparagine 159 each carry an N-linked (GlcNAc...) asparagine glycan. Residues 180–193 (VPPPPPMSSPPAPS) show a composition bias toward pro residues. The tract at residues 180-262 (VPPPPPMSSP…EPPSSASNTG (83 aa)) is disordered. Low complexity predominate over residues 219 to 234 (APETAPASAPSESDSP). Serine 256 carries GPI-anchor amidated serine lipidation. The propeptide at 257 to 280 (SASNTGLSFGAVLVLGFVASFVGF) is removed in mature form.

The protein belongs to the fasciclin-like AGP family.

It localises to the cell membrane. May be a cell surface adhesion protein. The polypeptide is Fasciclin-like arabinogalactan protein 3 (FLA3) (Arabidopsis thaliana (Mouse-ear cress)).